We begin with the raw amino-acid sequence, 89 residues long: Large ribosomal subunit protein bL31B (89 aa).

It belongs to the bacterial ribosomal protein bL31 family. Type B subfamily. Part of the 50S ribosomal subunit.

The sequence is that of Large ribosomal subunit protein bL31B from Corynebacterium urealyticum (strain ATCC 43042 / DSM 7109).